The chain runs to 276 residues: ATP synthase subunit a (276 aa).

7 helical membrane-spanning segments follow: residues 49 to 69 (KPML…FAAA), 109 to 129 (YLFT…IPFI), 137 to 157 (SGMV…AGIS), 173 to 193 (GIRG…NILV), 203 to 223 (FANM…GEYI), 232 to 252 (APVG…EMLI), and 253 to 273 (QFLQ…GAVA).

Belongs to the ATPase A chain family. In terms of assembly, F-type ATPases have 2 components, CF(1) - the catalytic core - and CF(0) - the membrane proton channel. CF(1) has five subunits: alpha(3), beta(3), gamma(1), delta(1), epsilon(1). CF(0) has three main subunits: a(1), b(2) and c(9-12). The alpha and beta chains form an alternating ring which encloses part of the gamma chain. CF(1) is attached to CF(0) by a central stalk formed by the gamma and epsilon chains, while a peripheral stalk is formed by the delta and b chains.

Its subcellular location is the cell membrane. Functionally, key component of the proton channel; it plays a direct role in the translocation of protons across the membrane. The polypeptide is ATP synthase subunit a (Nocardioides sp. (strain ATCC BAA-499 / JS614)).